Reading from the N-terminus, the 82-residue chain is Quinohemoprotein amine dehydrogenase subunit gamma (82 aa).

The 4-cysteinyl-glutamic acid (Cys-Glu) cross-link spans Cys7–Glu16. 2 cross-links (3-cysteinyl-aspartic acid (Cys-Asp)) span residues Cys27–Asp33 and Cys41–Asp49. Asp33 serves as the catalytic Proton acceptor. The segment at residues Cys37 to Trp43 is a cross-link (4'-cysteinyl-tryptophylquinone (Cys-Trp)). The residue at position 43 (Trp43) is a Tryptophylquinone.

This sequence belongs to the quinohemoprotein amine dehydrogenase subunit gamma family. In terms of assembly, heterotrimer of an alpha, a beta and a gamma subunit. Cysteine tryptophylquinone residue is required as a cofactor. The cysteine tryptophylquinone (CTQ) is generated by oxidation of the indole ring of a tryptophan residue to form tryptophylquinone, followed by covalent cross-linking with a cysteine residue.

The protein localises to the periplasm. It catalyses the reaction 2 Fe(III)-[cytochrome c550] + an aliphatic amine + H2O = 2 Fe(II)-[cytochrome c550] + an aldehyde + NH4(+) + 2 H(+). With respect to regulation, inhibited by carbonyl reagents such as hydrazine, hydroxylamine, phenylhydrazine and semicarbazide. Its function is as follows. Catalyzes the oxidative deamination of a wide range of primary aliphatic and aromatic amines. The physiological electron acceptor is the constitutive cytochrome c550. The sequence is that of Quinohemoprotein amine dehydrogenase subunit gamma (qhnDH) from Paracoccus denitrificans.